We begin with the raw amino-acid sequence, 506 residues long: 2,3-bisphosphoglycerate-independent phosphoglycerate mutase (506 aa).

Mn(2+) contacts are provided by D13 and S63. S63 (phosphoserine intermediate) is an active-site residue. Substrate is bound by residues H124, R153–D154, R183, R189, R255–R258, and K331. Residues D397, H401, D438, H439, and H457 each coordinate Mn(2+).

Belongs to the BPG-independent phosphoglycerate mutase family. Monomer. Mn(2+) serves as cofactor.

It carries out the reaction (2R)-2-phosphoglycerate = (2R)-3-phosphoglycerate. The protein operates within carbohydrate degradation; glycolysis; pyruvate from D-glyceraldehyde 3-phosphate: step 3/5. Catalyzes the interconversion of 2-phosphoglycerate and 3-phosphoglycerate. The protein is 2,3-bisphosphoglycerate-independent phosphoglycerate mutase of Ruegeria sp. (strain TM1040) (Silicibacter sp.).